Reading from the N-terminus, the 154-residue chain is Anti-sigma-E factor RseA (154 aa).

Threonine 39 carries the post-translational modification Phosphothreonine; by PknB. Residues histidine 66, cysteine 70, and cysteine 73 each contribute to the Zn(2+) site. Residues 104–154 form a disordered region; it reads SEIPRCPPEGPSKGSSGGSSQGPPDGAAAGFGDRFADGDGGNRGRQSRVRR. Residues 124–136 show a composition bias toward low complexity; sequence QGPPDGAAAGFGD.

It belongs to the zinc-associated anti-sigma factor (ZAS) superfamily. As to quaternary structure, interacts with cognate ECF RNA polymerase sigma factor SigE under reducing conditions; this inhibits the interaction of SigE with the RNA polymerase catalytic core. Requires Zn(2+) as cofactor. Post-translationally, phosphorylated by PknB on Thr-39; can be dephosphorylated (at least in vitro) by PstP. Phosphorylation is the signal for subsequent degradation by the ClpC1-ClpP2 complex. Degraded following vancomycin treatment (surface stress) by a ClpC1-ClpP2 complex.

The protein localises to the cytoplasm. In terms of biological role, an anti-sigma factor for extracytoplasmic function (ECF) sigma factor SigE. ECF sigma factors are held in an inactive form by an anti-sigma factor. The polypeptide is Anti-sigma-E factor RseA (rseA) (Mycobacterium tuberculosis (strain ATCC 25618 / H37Rv)).